A 127-amino-acid chain; its full sequence is Small ribosomal subunit protein uS12m (127 aa).

It belongs to the universal ribosomal protein uS12 family.

The protein localises to the mitochondrion. This Acanthamoeba castellanii (Amoeba) protein is Small ribosomal subunit protein uS12m (RPS12).